The chain runs to 1078 residues: Phosphatidylinositol-3,5-bisphosphate 3-phosphatase MTMR4 (1078 aa).

Residues 154 to 571 (DHVKSRFQIE…RALQLWTAVY (418 aa)) enclose the Myotubularin phosphatase domain. Positions 267–290 (RMPNGNPSNKGNNDGSDNSDTDFD) are disordered. Residues 270–282 (NGNPSNKGNNDGS) are compositionally biased toward low complexity. A 1,2-diacyl-sn-glycero-3-phospho-(1D-myo-inositol-3,5-bisphosphate) contacts are provided by asparagine 321, asparagine 346, and isoleucine 347. A 1,2-diacyl-sn-glycero-3-phospho-(1D-myo-inositol-3-phosphate) is bound by residues asparagine 321, asparagine 346, and isoleucine 347. Cysteine 408 (phosphocysteine intermediate) is an active-site residue. Residues serine 409, aspartate 410, glycine 411, tryptophan 412, aspartate 413, arginine 414, lysine 450, and arginine 454 each coordinate a 1,2-diacyl-sn-glycero-3-phospho-(1D-myo-inositol-3,5-bisphosphate). Residues serine 409, aspartate 410, glycine 411, tryptophan 412, aspartate 413, and arginine 414 each contribute to the a 1,2-diacyl-sn-glycero-3-phospho-(1D-myo-inositol-3-phosphate) site. An a 1,2-diacyl-sn-glycero-3-phospho-(1D-myo-inositol-3-phosphate)-binding site is contributed by arginine 454. A compositionally biased stretch (polar residues) spans 629-648 (SSDPNLNNHQGNLESCSSSK). The tract at residues 629–694 (SSDPNLNNHQ…SGSATNQNNN (66 aa)) is disordered. Residues 904 to 935 (VQQRLRQMEASYKQEVDLLRRQVWELQLQLEI) are a coiled coil. The segment at 960–982 (DGSDMDDLYSDKSEDRLSEASWE) is disordered. Residues 968–982 (YSDKSEDRLSEASWE) are compositionally biased toward basic and acidic residues. An FYVE-type zinc finger spans residues 997–1057 (DHMASHCFNC…VCNTCYDHIQ (61 aa)). The Zn(2+) site is built by cysteine 1003, cysteine 1006, cysteine 1019, cysteine 1022, cysteine 1027, cysteine 1030, cysteine 1049, and cysteine 1052.

It belongs to the protein-tyrosine phosphatase family. Non-receptor class myotubularin subfamily. As to quaternary structure, homooligomeric.

It localises to the early endosome membrane. The protein localises to the recycling endosome membrane. Its subcellular location is the late endosome membrane. The protein resides in the cytoplasmic vesicle. It is found in the phagosome membrane. It carries out the reaction a 1,2-diacyl-sn-glycero-3-phospho-(1D-myo-inositol-3-phosphate) + H2O = a 1,2-diacyl-sn-glycero-3-phospho-(1D-myo-inositol) + phosphate. It catalyses the reaction a 1,2-diacyl-sn-glycero-3-phospho-(1D-myo-inositol-3,5-bisphosphate) + H2O = a 1,2-diacyl-sn-glycero-3-phospho-(1D-myo-inositol-5-phosphate) + phosphate. The enzyme catalyses 1,2-dioctanoyl-sn-glycero-3-phospho-(1-D-myo-inositol-3-phosphate) + H2O = 1,2-dioctanoyl-sn-glycero-3-phospho-(1D-myo-inositol) + phosphate. The catalysed reaction is 1,2-dioctanoyl-sn-glycero-3-phospho-(1D-myo-inositol-3,5-bisphosphate) + H2O = 1,2-dioctanoyl-sn-glycero-3-phospho-(1D-myo-inositol-5-phosphate) + phosphate. Functionally, lipid phosphatase that specifically dephosphorylates the D-3 position of phosphatidylinositol 3-phosphate and phosphatidylinositol 3,5-bisphosphate, generating phosphatidylinositol and phosphatidylinositol 5-phosphate. Decreases the levels of phosphatidylinositol 3-phosphate, a phospholipid found in cell membranes where it acts as key regulator of both cell signaling and intracellular membrane traffic, in a subset of endosomal membranes to negatively regulate both endocytic recycling and trafficking and/or maturation of endosomes toward lysosomes. Through phosphatidylinositol 3-phosphate turnover in phagosome membranes regulates phagocytosis and phagosome maturation. By decreasing phosphatidylinositol 3-monophosphate (PI3P) levels in immune cells it can also regulate the innate immune response. Beside its lipid phosphatase activity, can also function as a molecular adapter to regulate midbody abscission during mitotic cytokinesis. Can also negatively regulate TGF-beta and BMP signaling through Smad proteins dephosphorylation and retention in endosomes. This Xenopus laevis (African clawed frog) protein is Phosphatidylinositol-3,5-bisphosphate 3-phosphatase MTMR4 (mtmr4).